A 366-amino-acid chain; its full sequence is Beta sliding clamp (366 aa).

Belongs to the beta sliding clamp family. As to quaternary structure, forms a ring-shaped head-to-tail homodimer around DNA which binds and tethers DNA polymerases and other proteins to the DNA. The DNA replisome complex has a single clamp-loading complex (3 tau and 1 each of delta, delta', psi and chi subunits) which binds 3 Pol III cores (1 core on the leading strand and 2 on the lagging strand) each with a beta sliding clamp dimer. Additional proteins in the replisome are other copies of gamma, psi and chi, Ssb, DNA helicase and RNA primase.

It is found in the cytoplasm. Its function is as follows. Confers DNA tethering and processivity to DNA polymerases and other proteins. Acts as a clamp, forming a ring around DNA (a reaction catalyzed by the clamp-loading complex) which diffuses in an ATP-independent manner freely and bidirectionally along dsDNA. Initially characterized for its ability to contact the catalytic subunit of DNA polymerase III (Pol III), a complex, multichain enzyme responsible for most of the replicative synthesis in bacteria; Pol III exhibits 3'-5' exonuclease proofreading activity. The beta chain is required for initiation of replication as well as for processivity of DNA replication. The chain is Beta sliding clamp (dnaN) from Vibrio cholerae serotype O1 (strain ATCC 39315 / El Tor Inaba N16961).